Consider the following 316-residue polypeptide: BTB/POZ domain-containing adapter for CUL3-mediated RhoA degradation protein 2 (316 aa).

Positions 28 to 96 constitute a BTB domain; the sequence is KYVQLNVGGS…LRDDTITLPQ (69 aa). Polar residues predominate over residues 268–279; that stretch reads EATSRSRSQASP. Residues 268–287 form a disordered region; it reads EATSRSRSQASPSEDEETFE. S278 is subject to Phosphoserine. Residue S280 is modified to Phosphoserine; by CK2.

It belongs to the BACURD family. As to quaternary structure, component of the BCR(TNFAIP1) E3 ubiquitin ligase complex, at least composed of CUL3, TNFAIP1/BACURD2 and RBX1. Interacts with RHOA; with a preference for RhoA-GDP. Interacts with RHOB. Interacts with PCNA. Interacts with CSNK2B. In terms of processing, phosphorylation at Ser-280 by CK2 facilitates the nucleus localization and increases interaction with PCNA.

It is found in the cytoplasm. The protein resides in the nucleus. Its subcellular location is the endosome. Its pathway is protein modification; protein ubiquitination. Functionally, substrate-specific adapter of a BCR (BTB-CUL3-RBX1) E3 ubiquitin-protein ligase complex involved in regulation of cytoskeleton structure. The BCR(TNFAIP1) E3 ubiquitin ligase complex mediates the ubiquitination of RHOA, leading to its degradation by the proteasome, thereby regulating the actin cytoskeleton and cell migration. Its interaction with RHOB may regulate apoptosis. May enhance the PCNA-dependent DNA polymerase delta activity. This Homo sapiens (Human) protein is BTB/POZ domain-containing adapter for CUL3-mediated RhoA degradation protein 2 (TNFAIP1).